A 420-amino-acid chain; its full sequence is Serine hydroxymethyltransferase (420 aa).

(6S)-5,6,7,8-tetrahydrofolate-binding positions include leucine 121 and 125–127; that span reads GHL. At lysine 230 the chain carries N6-(pyridoxal phosphate)lysine. Residues glutamate 246 and 354 to 356 contribute to the (6S)-5,6,7,8-tetrahydrofolate site; that span reads SPF.

Belongs to the SHMT family. Homodimer. Pyridoxal 5'-phosphate is required as a cofactor.

The protein resides in the cytoplasm. The catalysed reaction is (6R)-5,10-methylene-5,6,7,8-tetrahydrofolate + glycine + H2O = (6S)-5,6,7,8-tetrahydrofolate + L-serine. Its pathway is one-carbon metabolism; tetrahydrofolate interconversion. It functions in the pathway amino-acid biosynthesis; glycine biosynthesis; glycine from L-serine: step 1/1. Functionally, catalyzes the reversible interconversion of serine and glycine with tetrahydrofolate (THF) serving as the one-carbon carrier. This reaction serves as the major source of one-carbon groups required for the biosynthesis of purines, thymidylate, methionine, and other important biomolecules. Also exhibits THF-independent aldolase activity toward beta-hydroxyamino acids, producing glycine and aldehydes, via a retro-aldol mechanism. The protein is Serine hydroxymethyltransferase of Rickettsia typhi (strain ATCC VR-144 / Wilmington).